The chain runs to 304 residues: Glutaminase (304 aa).

Residues S63, N114, E158, N165, Y189, Y240, and V258 each coordinate substrate.

The protein belongs to the glutaminase family. In terms of assembly, homotetramer.

It catalyses the reaction L-glutamine + H2O = L-glutamate + NH4(+). This chain is Glutaminase, found in Shewanella loihica (strain ATCC BAA-1088 / PV-4).